A 596-amino-acid polypeptide reads, in one-letter code: Fructan 1-exohydrolase w2 (596 aa).

The signal sequence occupies residues 1–20 (MAQAWAFLLPVLVLGSYVTS). Asp75 is a catalytic residue. N-linked (GlcNAc...) asparagine glycans are attached at residues Asn168, Asn236, and Asn248. Cys446 and Cys492 are oxidised to a cystine. N-linked (GlcNAc...) asparagine glycosylation is present at Asn567.

It belongs to the glycosyl hydrolase 32 family.

It catalyses the reaction Hydrolysis of terminal, non-reducing (2-&gt;1)-linked beta-D-fructofuranose residues in fructans.. Inhibited by sucrose. In terms of biological role, hydrolyzes inulin-type beta-(2,1)-fructans, but not beta-(2,1)-linkages in branched fructans. Has low activity against beta-(2,6)-linked fructans. May play a role as a beta-(2,1)-trimmer during graminan biosynthesis. In Triticum aestivum (Wheat), this protein is Fructan 1-exohydrolase w2.